We begin with the raw amino-acid sequence, 441 residues long: Enolase (441 aa).

Residue glutamine 164 coordinates (2R)-2-phosphoglycerate. The active-site Proton donor is glutamate 206. Residues aspartate 243, glutamate 289, and aspartate 316 each coordinate Mg(2+). Lysine 341, arginine 370, serine 371, and lysine 392 together coordinate (2R)-2-phosphoglycerate. Residue lysine 341 is the Proton acceptor of the active site.

Belongs to the enolase family. It depends on Mg(2+) as a cofactor.

It is found in the cytoplasm. The protein resides in the secreted. Its subcellular location is the cell surface. The catalysed reaction is (2R)-2-phosphoglycerate = phosphoenolpyruvate + H2O. It participates in carbohydrate degradation; glycolysis; pyruvate from D-glyceraldehyde 3-phosphate: step 4/5. Catalyzes the reversible conversion of 2-phosphoglycerate (2-PG) into phosphoenolpyruvate (PEP). It is essential for the degradation of carbohydrates via glycolysis. The protein is Enolase of Leuconostoc mesenteroides subsp. mesenteroides (strain ATCC 8293 / DSM 20343 / BCRC 11652 / CCM 1803 / JCM 6124 / NCDO 523 / NBRC 100496 / NCIMB 8023 / NCTC 12954 / NRRL B-1118 / 37Y).